We begin with the raw amino-acid sequence, 116 residues long: Large ribosomal subunit protein uL18 (116 aa).

Belongs to the universal ribosomal protein uL18 family. In terms of assembly, part of the 50S ribosomal subunit; part of the 5S rRNA/L5/L18/L25 subcomplex. Contacts the 5S and 23S rRNAs.

In terms of biological role, this is one of the proteins that bind and probably mediate the attachment of the 5S RNA into the large ribosomal subunit, where it forms part of the central protuberance. The protein is Large ribosomal subunit protein uL18 of Shewanella frigidimarina (strain NCIMB 400).